Here is a 330-residue protein sequence, read N- to C-terminus: Aspartate--ammonia ligase (330 aa).

It belongs to the class-II aminoacyl-tRNA synthetase family. AsnA subfamily.

Its subcellular location is the cytoplasm. The enzyme catalyses L-aspartate + NH4(+) + ATP = L-asparagine + AMP + diphosphate + H(+). It participates in amino-acid biosynthesis; L-asparagine biosynthesis; L-asparagine from L-aspartate (ammonia route): step 1/1. The protein is Aspartate--ammonia ligase of Klebsiella pneumoniae (strain 342).